Reading from the N-terminus, the 452-residue chain is Low-affinity putrescine importer PlaP (452 aa).

Residues 1 to 16 (MSHNVTPNTSRVELRK) lie on the Cytoplasmic side of the membrane. The helical transmembrane segment at 17-37 (TLTLVPVVMMGLAYMQPMTLF) threads the bilayer. Over 38 to 48 (DTFGIVSGLTD) the chain is Periplasmic. A helical membrane pass occupies residues 49-69 (GHVPTAYAFALIAILFTALSY). At 70 to 95 (GKLVRRYPSAGSAYTYAQKSISPTVG) the chain is on the cytoplasmic side. The chain crosses the membrane as a helical span at residues 96–116 (FMVGWSSLLDYLFAPMINILL). Residues 117-123 (AKIYFEA) are Periplasmic-facing. The helical transmembrane segment at 124–144 (LVPSIPSWMFVVALVAFMTAF) threads the bilayer. Over 145–158 (NLRSLKSVANFNTV) the chain is Cytoplasmic. A helical membrane pass occupies residues 159–179 (IVVLQVVLIAVILGMVVYGVF). The Periplasmic portion of the chain corresponds to 180–199 (EGEGAGTLASTRPFWSGDAH). A helical transmembrane segment spans residues 200–220 (VIPMITGATILCFSFTGFDGI). The Cytoplasmic segment spans residues 221 to 237 (SNLSEETKDAERVIPRA). Residues 238–258 (IFLTALIGGMIFIFATYFLQL) traverse the membrane as a helical segment. Topologically, residues 259 to 283 (YFPDISRFKDPDASQPEIMLYVAGK) are periplasmic. The helical transmembrane segment at 284-304 (AFQVGALIFSTITVLASGMAA) threads the bilayer. At 305-339 (HAGVARLMYVMGRDGVFPKSFFGYVHPKWRTPAMN) the chain is on the cytoplasmic side. The next 2 membrane-spanning stretches (helical) occupy residues 340-360 (IILV…MATA) and 361-381 (LINF…ISQF). At 382 to 394 (WIREKRNKTLKDH) the chain is on the cytoplasmic side. A helical membrane pass occupies residues 395-415 (FQYLFLPMCGALTVGALWVNL). Over 416-417 (EE) the chain is Periplasmic. The chain crosses the membrane as a helical span at residues 418–438 (SSMVLGLIWAAIGLIYLACVT). Over 439 to 452 (KSFRNPVPQYEDVA) the chain is Cytoplasmic.

The protein belongs to the amino acid-polyamine-organocation (APC) superfamily.

It is found in the cell inner membrane. The catalysed reaction is putrescine(in) + H(+)(in) = putrescine(out) + H(+)(out). In terms of biological role, putrescine importer. This is Low-affinity putrescine importer PlaP (plaP) from Escherichia coli O157:H7.